Reading from the N-terminus, the 281-residue chain is Bifunctional protein FolD (281 aa).

NADP(+)-binding positions include 165–167, threonine 192, and valine 233; that span reads GRG.

The protein belongs to the tetrahydrofolate dehydrogenase/cyclohydrolase family. As to quaternary structure, homodimer.

The enzyme catalyses (6R)-5,10-methylene-5,6,7,8-tetrahydrofolate + NADP(+) = (6R)-5,10-methenyltetrahydrofolate + NADPH. The catalysed reaction is (6R)-5,10-methenyltetrahydrofolate + H2O = (6R)-10-formyltetrahydrofolate + H(+). It functions in the pathway one-carbon metabolism; tetrahydrofolate interconversion. Its function is as follows. Catalyzes the oxidation of 5,10-methylenetetrahydrofolate to 5,10-methenyltetrahydrofolate and then the hydrolysis of 5,10-methenyltetrahydrofolate to 10-formyltetrahydrofolate. This Mycobacterium tuberculosis (strain ATCC 25177 / H37Ra) protein is Bifunctional protein FolD.